The primary structure comprises 267 residues: MAALTPSRSVFASTCKTIAQQCSRRPVAVQQLAAVPVARQVSSSSAVQQEQDASGTSSSQQPRPRWSYTPERMKGPGFSLNLVKDPRRKQWMVNSDPAKLDAFYDAFLGQGGSRMLSEETKWLAVTHKSFDYGRRGYNTRLAFLGRQIIALETTRSILTSPVLNEPIVDKYGRTPYNHAALANIDKLIYTQPLDIMDKTKIARMGIDFGLLTVMRWKPRMPEDLESSGVVVVLNSTLFAIIGAISLEKGAAVAQRIVREKILKRLGA.

Over residues 43–54 (SSSAVQQEQDAS) the composition is skewed to low complexity. The segment at 43 to 73 (SSSAVQQEQDASGTSSSQQPRPRWSYTPERM) is disordered.

This sequence belongs to the ribonuclease III family. Mitochondrion-specific ribosomal protein mL57 subfamily. As to quaternary structure, component of the mitochondrial large ribosomal subunit (mt-LSU). Mature N.crassa 74S mitochondrial ribosomes consist of a small (37S) and a large (54S) subunit. The 37S small subunit contains a 16S ribosomal RNA (16S mt-rRNA) and 32 different proteins. The 54S large subunit contains a 23S rRNA (23S mt-rRNA) and 42 different proteins. mL57 forms a heterodimer with mL44 and stabilizes rRNA expansion segments 1/2 at a membrane-facing protuberance close to the point of attachment of the ribosome to the translocon in the membrane.

The protein localises to the mitochondrion. Its function is as follows. Component of the mitochondrial ribosome (mitoribosome), a dedicated translation machinery responsible for the synthesis of mitochondrial genome-encoded proteins, including at least some of the essential transmembrane subunits of the mitochondrial respiratory chain. The mitoribosomes are attached to the mitochondrial inner membrane and translation products are cotranslationally integrated into the membrane. This chain is Large ribosomal subunit protein mL57 (mrpl15), found in Neurospora crassa (strain ATCC 24698 / 74-OR23-1A / CBS 708.71 / DSM 1257 / FGSC 987).